A 360-amino-acid polypeptide reads, in one-letter code: Peptide chain release factor 1 (360 aa).

Gln-235 bears the N5-methylglutamine mark. Residues 285–314 (KRQQAEASTRRNLLGSGDRSDRNRTYNFPQ) are disordered.

It belongs to the prokaryotic/mitochondrial release factor family. Post-translationally, methylated by PrmC. Methylation increases the termination efficiency of RF1.

The protein resides in the cytoplasm. Functionally, peptide chain release factor 1 directs the termination of translation in response to the peptide chain termination codons UAG and UAA. The polypeptide is Peptide chain release factor 1 (Klebsiella pneumoniae subsp. pneumoniae (strain ATCC 700721 / MGH 78578)).